The primary structure comprises 309 residues: Taste receptor type 2 member 31 (309 aa).

The Extracellular segment spans residues 1–2 (MI). The helical transmembrane segment at 3–23 (TFLPIIFSILVVVTFVIGNFA) threads the bilayer. At 24–55 (NGFIALVNSTEWVKRQKISFADQILTALAVSR) the chain is on the cytoplasmic side. The chain crosses the membrane as a helical span at residues 56–76 (VGLLWVLLLNWYATVLNPAFY). The Extracellular portion of the chain corresponds to 77 to 100 (SVEVRTTTYNVWAVTNHFSNWLAT). Residues 101–121 (SLSIFYLLKIANFSNLIFLHL) traverse the membrane as a helical segment. The Cytoplasmic portion of the chain corresponds to 122–126 (KRRVK). Residues 127–147 (NVILVMLLGPLLILACHLFMV) traverse the membrane as a helical segment. Topologically, residues 148 to 181 (NMNEIVRTKEYEENMTWKYILRNAIYHPGMTVTT) are extracellular. Asn-161 carries an N-linked (GlcNAc...) asparagine glycan. The helical transmembrane segment at 182–202 (LQNLVPFTLTLISFLLLICSL) threads the bilayer. Residues 203–229 (CKHLKKMQLHGKGPQDPSTKVHIKALQ) lie on the Cytoplasmic side of the membrane. The helical transmembrane segment at 230–250 (IVISFLLLCVIYFVSVIISIW) threads the bilayer. Residues 251-259 (SFESLGNKP) lie on the Extracellular side of the membrane. Residues 260 to 280 (VFMFCQAIRFSYPSAHPFIVI) traverse the membrane as a helical segment. The Cytoplasmic portion of the chain corresponds to 281–309 (WGNKKLKQTFLSVLWNVRYWVKGQKPSSL).

The protein belongs to the G-protein coupled receptor T2R family.

It is found in the membrane. Functionally, receptor that may play a role in the perception of bitterness and is gustducin-linked. May play a role in sensing the chemical composition of the gastrointestinal content. The activity of this receptor may stimulate alpha gustducin, mediate PLC-beta-2 activation and lead to the gating of TRPM5. The chain is Taste receptor type 2 member 31 (TAS2R31) from Papio hamadryas (Hamadryas baboon).